A 372-amino-acid chain; its full sequence is Ligninase LG6 (372 aa).

The first 21 residues, 1–21 (MALKQLAAAVALALSIQAAQG), serve as a signal peptide directing secretion. Positions 22-28 (AAVKEKR) are excised as a propeptide. 2 disulfides stabilise this stretch: C31/C43 and C62/C148. Catalysis depends on H75, which acts as the Proton acceptor. Ca(2+) contacts are provided by D76, G94, D96, and S98. H204 lines the heme b pocket. Residues S205, D222, T224, V227, and D229 each coordinate Ca(2+). A disulfide bridge links C277 with C345. Residue N285 is glycosylated (N-linked (GlcNAc...) asparagine). The span at 352–361 (TLTTLPGPET) shows a compositional bias: low complexity. The segment at 352–372 (TLTTLPGPETSVQRIQPPPGA) is disordered.

It belongs to the peroxidase family. Ligninase subfamily. Heme b serves as cofactor. The cofactor is Ca(2+).

The catalysed reaction is 1-(3,4-dimethoxyphenyl)-2-(2-methoxyphenoxy)propane-1,3-diol + H2O2 = 3,4-dimethoxybenzaldehyde + guaiacol + glycolaldehyde + H2O. It carries out the reaction 2 (3,4-dimethoxyphenyl)methanol + H2O2 = 2 (3,4-dimethoxyphenyl)methanol radical + 2 H2O. It functions in the pathway secondary metabolite metabolism; lignin degradation. Functionally, depolymerization of lignin. Catalyzes the C(alpha)-C(beta) cleavage of the propyl side chains of lignin. This is Ligninase LG6 (GLG6) from Phanerodontia chrysosporium (White-rot fungus).